Consider the following 335-residue polypeptide: DNA-directed RNA polymerase subunit alpha (335 aa).

An alpha N-terminal domain (alpha-NTD) region spans residues 1–231 (MVREKITVST…DLLIPFLHTK (231 aa)). Positions 263–335 (KKMALKSIFI…FVIDLPKNKF (73 aa)) are alpha C-terminal domain (alpha-CTD).

Belongs to the RNA polymerase alpha chain family. In terms of assembly, in plastids the minimal PEP RNA polymerase catalytic core is composed of four subunits: alpha, beta, beta', and beta''. When a (nuclear-encoded) sigma factor is associated with the core the holoenzyme is formed, which can initiate transcription.

The protein localises to the plastid. The protein resides in the chloroplast. The enzyme catalyses RNA(n) + a ribonucleoside 5'-triphosphate = RNA(n+1) + diphosphate. Its function is as follows. DNA-dependent RNA polymerase catalyzes the transcription of DNA into RNA using the four ribonucleoside triphosphates as substrates. This is DNA-directed RNA polymerase subunit alpha from Helianthus annuus (Common sunflower).